Here is a 352-residue protein sequence, read N- to C-terminus: tRNA N6-adenosine threonylcarbamoyltransferase (352 aa).

Residues His-115 and His-119 each coordinate Fe cation. Residues 138–142, Asp-171, Gly-184, and Asn-277 contribute to the substrate site; that span reads LVSGG. Asp-305 is a Fe cation binding site.

Belongs to the KAE1 / TsaD family. It depends on Fe(2+) as a cofactor.

The protein resides in the cytoplasm. It carries out the reaction L-threonylcarbamoyladenylate + adenosine(37) in tRNA = N(6)-L-threonylcarbamoyladenosine(37) in tRNA + AMP + H(+). Its function is as follows. Required for the formation of a threonylcarbamoyl group on adenosine at position 37 (t(6)A37) in tRNAs that read codons beginning with adenine. Is involved in the transfer of the threonylcarbamoyl moiety of threonylcarbamoyl-AMP (TC-AMP) to the N6 group of A37, together with TsaE and TsaB. TsaD likely plays a direct catalytic role in this reaction. The sequence is that of tRNA N6-adenosine threonylcarbamoyltransferase from Variovorax paradoxus (strain S110).